A 227-amino-acid chain; its full sequence is Cytidylate kinase (227 aa).

Residue 12–20 (GPSGAGKGT) coordinates ATP.

It belongs to the cytidylate kinase family. Type 1 subfamily.

The protein resides in the cytoplasm. The enzyme catalyses CMP + ATP = CDP + ADP. The catalysed reaction is dCMP + ATP = dCDP + ADP. This Xanthomonas euvesicatoria pv. vesicatoria (strain 85-10) (Xanthomonas campestris pv. vesicatoria) protein is Cytidylate kinase.